We begin with the raw amino-acid sequence, 395 residues long: Indoleacetate--lysine synthetase (395 aa).

It belongs to the ATP-dependent AMP-binding enzyme family.

It catalyses the reaction (indol-3-yl)acetate + L-lysine + ATP = N(6)-[(indole-3-yl)acetyl]-L-lysine + ADP + phosphate + H(+). In terms of biological role, conversion of IAA to IAA-lysine. This is Indoleacetate--lysine synthetase (iaaL) from Pseudomonas savastanoi (Pseudomonas syringae pv. savastanoi).